The chain runs to 266 residues: MPHMEDNGSEKEQLFLQHIQNLPQERLDAIRGHPELVLKEIDEFTYPDGSGVRMCIGDVKGGFIVGKIRERKPKIMVELGGYLGYSAILFGNEISKIPGGRYYSLEVNEDYAKIAYELVKLAGLDEIVTIMIGKACDSLVELQQKLLHKDLGFQALDMVFIDHWKDLYVPDLRVIESLNMIAPGTLLVADNIITPGAPEYHKYVNMSPEERRGYQAKVRNVNGFDFIGRWDLIYKTETKEFEGVIRNKHRKDAVDVTECVGYAKKD.

7 residues coordinate S-adenosyl-L-methionine: I56, E78, S86, E106, V107, A135, and D162. D162 serves as a coordination point for Mg(2+). K165 contributes to the substrate binding site. Residues D190 and N191 each coordinate Mg(2+). N191 is a binding site for substrate.

This sequence belongs to the class I-like SAM-binding methyltransferase superfamily. Cation-dependent O-methyltransferase family. Mg(2+) is required as a cofactor.

It localises to the cytoplasm. The protein resides in the nucleus. The enzyme catalyses a catechol + S-adenosyl-L-methionine = a guaiacol + S-adenosyl-L-homocysteine + H(+). The protein is Probable catechol O-methyltransferase 1 of Schizosaccharomyces pombe (strain 972 / ATCC 24843) (Fission yeast).